A 299-amino-acid chain; its full sequence is Protoheme IX farnesyltransferase (299 aa).

9 helical membrane passes run 27–47 (VVALMLLTSVVGMSLAPHEHF), 53–73 (LIALVGIALMAGSAAAFNHLI), 97–117 (FNVLLFALLIGSLGFLSLMLW), 121–141 (LTAYLTFASLLGYAVVYTLYL), 149–169 (IVIAGIAGAMPPLLGWTSITG), 175–195 (AWLLVMIIFIWTPPHFWALAI), 222–242 (ILLYAILLALVCMLPVLVGMA), 244–264 (YLYLFSALVLNVCFVRYAIKL), and 273–293 (AIEMFRFSIYFLLLLFCALLL).

It belongs to the UbiA prenyltransferase family. Protoheme IX farnesyltransferase subfamily.

The protein localises to the cell inner membrane. The catalysed reaction is heme b + (2E,6E)-farnesyl diphosphate + H2O = Fe(II)-heme o + diphosphate. It functions in the pathway porphyrin-containing compound metabolism; heme O biosynthesis; heme O from protoheme: step 1/1. Converts heme B (protoheme IX) to heme O by substitution of the vinyl group on carbon 2 of heme B porphyrin ring with a hydroxyethyl farnesyl side group. The sequence is that of Protoheme IX farnesyltransferase from Vibrio vulnificus (strain YJ016).